The primary structure comprises 276 residues: MSARWTSAVLDPQITGGWAVARSPEGFLVDANGALFPRDWLKRQDLDVLAEHGIGHFDGEPVFLLELRSTAEVPGCGWRGLRSFMLEGDFDLYKVLGYAAQIGTWAREHRFCGSCGQPMTQIRWERAMYCQPCDLRSYPRISPSMIVLVTRGDEILLARSPRFVTGVYSTLAGFAEPGESAEDCLVREVREEVAVEVTNIQYVGSQCWPFPHSMMLGFHAEYAGGEIVMQPDEIEDARWFNVHDLPPLPAGRSIARYLIDLYVARRSGLPEPVLPR.

Arg82 contacts substrate. The Zn(2+) site is built by Cys112 and Cys115. Glu125 lines the substrate pocket. The Zn(2+) site is built by Cys130 and Cys133. Tyr138 contributes to the substrate binding site. The 124-residue stretch at 139–262 folds into the Nudix hydrolase domain; it reads PRISPSMIVL…SIARYLIDLY (124 aa). 3 residues coordinate a divalent metal cation: Ala172, Glu188, and Glu192. The Nudix box signature appears at 173–194; sequence GFAEPGESAEDCLVREVREEVA. 206–213 contacts substrate; the sequence is QCWPFPHS. Glu233 is an a divalent metal cation binding site. Position 255 (Ala255) interacts with substrate.

It belongs to the Nudix hydrolase family. NudC subfamily. Homodimer. Requires Mg(2+) as cofactor. Mn(2+) is required as a cofactor. It depends on Zn(2+) as a cofactor.

It carries out the reaction a 5'-end NAD(+)-phospho-ribonucleoside in mRNA + H2O = a 5'-end phospho-adenosine-phospho-ribonucleoside in mRNA + beta-nicotinamide D-ribonucleotide + 2 H(+). The enzyme catalyses NAD(+) + H2O = beta-nicotinamide D-ribonucleotide + AMP + 2 H(+). The catalysed reaction is NADH + H2O = reduced beta-nicotinamide D-ribonucleotide + AMP + 2 H(+). Functionally, mRNA decapping enzyme that specifically removes the nicotinamide adenine dinucleotide (NAD) cap from a subset of mRNAs by hydrolyzing the diphosphate linkage to produce nicotinamide mononucleotide (NMN) and 5' monophosphate mRNA. The NAD-cap is present at the 5'-end of some mRNAs and stabilizes RNA against 5'-processing. Has preference for mRNAs with a 5'-end purine. Catalyzes the hydrolysis of a broad range of dinucleotide pyrophosphates. The sequence is that of NAD-capped RNA hydrolase NudC from Pseudomonas putida (strain W619).